The chain runs to 288 residues: Pantothenate synthetase (288 aa).

31–38 (MGNLHRGH) contributes to the ATP binding site. Residue histidine 38 is the Proton donor of the active site. Residue glutamine 62 coordinates (R)-pantoate. Glutamine 62 provides a ligand contact to beta-alanine. 150–153 (GQKD) is an ATP binding site. Glutamine 156 provides a ligand contact to (R)-pantoate. Residues isoleucine 179 and 187–190 (LSSR) each bind ATP.

Belongs to the pantothenate synthetase family. As to quaternary structure, homodimer.

It localises to the cytoplasm. It carries out the reaction (R)-pantoate + beta-alanine + ATP = (R)-pantothenate + AMP + diphosphate + H(+). The protein operates within cofactor biosynthesis; (R)-pantothenate biosynthesis; (R)-pantothenate from (R)-pantoate and beta-alanine: step 1/1. Catalyzes the condensation of pantoate with beta-alanine in an ATP-dependent reaction via a pantoyl-adenylate intermediate. The chain is Pantothenate synthetase from Wigglesworthia glossinidia brevipalpis.